Here is a 435-residue protein sequence, read N- to C-terminus: Probable exopolygalacturonase B (435 aa).

Positions 1-15 (MKFFTAALFASAVSA) are cleaved as a signal peptide. N-linked (GlcNAc...) asparagine glycosylation is found at Asn59, Asn184, and Asn224. The active-site Proton donor is Asp254. A disulfide bridge connects residues Cys256 and Cys273. Residues Asn262 and Asn274 are each glycosylated (N-linked (GlcNAc...) asparagine). His277 is an active-site residue. N-linked (GlcNAc...) asparagine glycans are attached at residues Asn301, Asn328, Asn365, and Asn368. Cys391 and Cys397 form a disulfide bridge.

This sequence belongs to the glycosyl hydrolase 28 family.

Its subcellular location is the secreted. It carries out the reaction [(1-&gt;4)-alpha-D-galacturonosyl](n) + H2O = alpha-D-galacturonate + [(1-&gt;4)-alpha-D-galacturonosyl](n-1). Specific in hydrolyzing the terminal glycosidic bond of polygalacturonic acid and oligogalacturonates. The sequence is that of Probable exopolygalacturonase B (pgxB) from Aspergillus terreus (strain NIH 2624 / FGSC A1156).